Reading from the N-terminus, the 307-residue chain is Urease accessory protein UreD (307 aa).

The protein belongs to the UreD family. UreD, UreF and UreG form a complex that acts as a GTP-hydrolysis-dependent molecular chaperone, activating the urease apoprotein by helping to assemble the nickel containing metallocenter of UreC. The UreE protein probably delivers the nickel.

Its subcellular location is the cytoplasm. Functionally, required for maturation of urease via the functional incorporation of the urease nickel metallocenter. This chain is Urease accessory protein UreD, found in Prochlorococcus marinus (strain NATL1A).